We begin with the raw amino-acid sequence, 204 residues long: Holliday junction branch migration complex subunit RuvA (204 aa).

Residues 1–63 (MIGWLQGRVL…EDGQFLYGFS (63 aa)) are domain I. Positions 64–142 (SFLQRQLFRE…KNDLFLCDES (79 aa)) are domain II. A flexible linker region spans residues 143–152 (ESSRAPIALS). The segment at 152–204 (SASEEAIQALIALELAPAEAELWVKKAQKTLAEDADSAALIKTAFALRLQGAK) is domain III.

The protein belongs to the RuvA family. In terms of assembly, homotetramer. Forms an RuvA(8)-RuvB(12)-Holliday junction (HJ) complex. HJ DNA is sandwiched between 2 RuvA tetramers; dsDNA enters through RuvA and exits via RuvB. An RuvB hexamer assembles on each DNA strand where it exits the tetramer. Each RuvB hexamer is contacted by two RuvA subunits (via domain III) on 2 adjacent RuvB subunits; this complex drives branch migration. In the full resolvosome a probable DNA-RuvA(4)-RuvB(12)-RuvC(2) complex forms which resolves the HJ.

It localises to the cytoplasm. Functionally, the RuvA-RuvB-RuvC complex processes Holliday junction (HJ) DNA during genetic recombination and DNA repair, while the RuvA-RuvB complex plays an important role in the rescue of blocked DNA replication forks via replication fork reversal (RFR). RuvA specifically binds to HJ cruciform DNA, conferring on it an open structure. The RuvB hexamer acts as an ATP-dependent pump, pulling dsDNA into and through the RuvAB complex. HJ branch migration allows RuvC to scan DNA until it finds its consensus sequence, where it cleaves and resolves the cruciform DNA. This chain is Holliday junction branch migration complex subunit RuvA, found in Dichelobacter nodosus (strain VCS1703A).